The sequence spans 139 residues: Metallothiol transferase FosB (139 aa).

The region spanning 4 to 119 is the VOC domain; sequence GINHITYSVS…DGHKLELHTG (116 aa). Residues His7, His66, and Glu115 each contribute to the Mg(2+) site. Glu115 acts as the Proton donor/acceptor in catalysis.

It belongs to the fosfomycin resistance protein family. FosB subfamily. Homodimer. The cofactor is Mg(2+).

Its subcellular location is the cytoplasm. Functionally, metallothiol transferase which confers resistance to fosfomycin by catalyzing the addition of a thiol cofactor to fosfomycin. L-cysteine is probably the physiological thiol donor. This is Metallothiol transferase FosB from Staphylococcus epidermidis.